Reading from the N-terminus, the 584-residue chain is 2-succinyl-5-enolpyruvyl-6-hydroxy-3-cyclohexene-1-carboxylate synthase (584 aa).

This sequence belongs to the TPP enzyme family. MenD subfamily. Homodimer. Mg(2+) serves as cofactor. Mn(2+) is required as a cofactor. Requires thiamine diphosphate as cofactor.

The catalysed reaction is isochorismate + 2-oxoglutarate + H(+) = 5-enolpyruvoyl-6-hydroxy-2-succinyl-cyclohex-3-ene-1-carboxylate + CO2. It participates in quinol/quinone metabolism; 1,4-dihydroxy-2-naphthoate biosynthesis; 1,4-dihydroxy-2-naphthoate from chorismate: step 2/7. Its pathway is quinol/quinone metabolism; menaquinone biosynthesis. In terms of biological role, catalyzes the thiamine diphosphate-dependent decarboxylation of 2-oxoglutarate and the subsequent addition of the resulting succinic semialdehyde-thiamine pyrophosphate anion to isochorismate to yield 2-succinyl-5-enolpyruvyl-6-hydroxy-3-cyclohexene-1-carboxylate (SEPHCHC). The protein is 2-succinyl-5-enolpyruvyl-6-hydroxy-3-cyclohexene-1-carboxylate synthase of Bacillus cereus (strain ZK / E33L).